We begin with the raw amino-acid sequence, 48 residues long: uncharacterized protein (48 aa).

Positions 1–20 (MLLKNWPSRRIQRDKSKRAG) are disordered.

This is an uncharacterized protein from Bacillus subtilis (strain 168).